The primary structure comprises 321 residues: Lipoyl synthase (321 aa).

The [4Fe-4S] cluster site is built by Cys68, Cys73, Cys79, Cys94, Cys98, Cys101, and Ser308. In terms of domain architecture, Radical SAM core spans 80-297; that stretch reads FNHGTATFMI…KAEALAMGFT (218 aa).

This sequence belongs to the radical SAM superfamily. Lipoyl synthase family. [4Fe-4S] cluster serves as cofactor.

It localises to the cytoplasm. It catalyses the reaction [[Fe-S] cluster scaffold protein carrying a second [4Fe-4S](2+) cluster] + N(6)-octanoyl-L-lysyl-[protein] + 2 oxidized [2Fe-2S]-[ferredoxin] + 2 S-adenosyl-L-methionine + 4 H(+) = [[Fe-S] cluster scaffold protein] + N(6)-[(R)-dihydrolipoyl]-L-lysyl-[protein] + 4 Fe(3+) + 2 hydrogen sulfide + 2 5'-deoxyadenosine + 2 L-methionine + 2 reduced [2Fe-2S]-[ferredoxin]. Its pathway is protein modification; protein lipoylation via endogenous pathway; protein N(6)-(lipoyl)lysine from octanoyl-[acyl-carrier-protein]: step 2/2. In terms of biological role, catalyzes the radical-mediated insertion of two sulfur atoms into the C-6 and C-8 positions of the octanoyl moiety bound to the lipoyl domains of lipoate-dependent enzymes, thereby converting the octanoylated domains into lipoylated derivatives. The chain is Lipoyl synthase from Salmonella typhi.